The sequence spans 102 residues: uncharacterized protein (102 aa).

Essential for virus function. This is an uncharacterized protein from Saccharolobus solfataricus (Sulfolobus solfataricus).